Consider the following 43-residue polypeptide: Protein PsbN (43 aa).

Residues 7-27 (VAIFISCLLVSFTGYALYTAF) form a helical membrane-spanning segment.

The protein belongs to the PsbN family.

Its subcellular location is the plastid. The protein localises to the chloroplast thylakoid membrane. Functionally, may play a role in photosystem I and II biogenesis. In Huperzia lucidula (Shining clubmoss), this protein is Protein PsbN.